The primary structure comprises 33 residues: Ice-structuring protein GS-5 (33 aa).

Blocked amino end (Met) is present on methionine 1.

This sequence belongs to the type-I AFP family.

Functionally, antifreeze proteins lower the blood freezing point. This chain is Ice-structuring protein GS-5, found in Myoxocephalus aenaeus (Grubby sculpin).